The following is a 62-amino-acid chain: Large ribosomal subunit protein uL29 (62 aa).

This sequence belongs to the universal ribosomal protein uL29 family.

The sequence is that of Large ribosomal subunit protein uL29 from Trichlorobacter lovleyi (strain ATCC BAA-1151 / DSM 17278 / SZ) (Geobacter lovleyi).